We begin with the raw amino-acid sequence, 136 residues long: Piercer of microtubule wall 1 protein (136 aa).

Residues 1–16 are compositionally biased toward basic and acidic residues; that stretch reads MSEEDPKACAEPEEPK. Positions 1-27 are disordered; sequence MSEEDPKACAEPEEPKAGPPPEKTSDW.

The protein belongs to the PIERCE1 family. In terms of assembly, microtubule inner protein component of sperm flagellar doublet microtubules. Interacts with CFAP53, ODAD1 and ODAD3; the interactions link the outer dynein arms docking complex (ODA-DC) to the internal microtubule inner proteins (MIP) in cilium axoneme. In terms of tissue distribution, expressed in trachea multiciliated cells.

The protein resides in the cytoplasm. It localises to the cytoskeleton. Its subcellular location is the cilium axoneme. It is found in the flagellum axoneme. Microtubule inner protein involved in the attachment of outer dynein arms (ODAs) to dynein-decorated doublet microtubules (DMTs) in cilia axoneme, which is required for motile cilia beating. Functions at the initial step of left-right asymmetry specification of the visceral organs. The chain is Piercer of microtubule wall 1 protein (PIERCE1) from Bos taurus (Bovine).